Consider the following 425-residue polypeptide: Tol-Pal system protein TolB (425 aa).

The N-terminal stretch at Met-1–Ala-23 is a signal peptide.

It belongs to the TolB family. The Tol-Pal system is composed of five core proteins: the inner membrane proteins TolA, TolQ and TolR, the periplasmic protein TolB and the outer membrane protein Pal. They form a network linking the inner and outer membranes and the peptidoglycan layer.

It localises to the periplasm. In terms of biological role, part of the Tol-Pal system, which plays a role in outer membrane invagination during cell division and is important for maintaining outer membrane integrity. The protein is Tol-Pal system protein TolB of Albidiferax ferrireducens (strain ATCC BAA-621 / DSM 15236 / T118) (Rhodoferax ferrireducens).